The chain runs to 155 residues: Small ribosomal subunit protein uS15 (155 aa).

Positions 1 to 10 (MARMHTRRRG) are enriched in basic residues. The disordered stretch occupies residues 1–66 (MARMHTRRRG…EGVQGTPVPD (66 aa)). The segment covering 21–33 (EPPEWSDVDEDAI) has biased composition (acidic residues). Positions 34–45 (EERVVELAEQGH) are enriched in basic and acidic residues.

This sequence belongs to the universal ribosomal protein uS15 family. In terms of assembly, part of the 30S ribosomal subunit.

The chain is Small ribosomal subunit protein uS15 from Halobacterium salinarum (strain ATCC 700922 / JCM 11081 / NRC-1) (Halobacterium halobium).